The primary structure comprises 251 residues: uncharacterized protein (251 aa).

The segment at 229 to 251 is disordered; it reads TSTETSPEHQADLKDDNSDISST. Over residues 234 to 245 the composition is skewed to basic and acidic residues; it reads SPEHQADLKDDN.

This is an uncharacterized protein from Acanthamoeba polyphaga (Amoeba).